The sequence spans 129 residues: MYDNLKSLGITNPDEIDRYSLRQEANNDILKIYFHKDKGEFFAKSVKFKYPRQRKTVVADGVGQGYKEVQEISPNLRYVIDELDQICQRDRTEVDLKRKILDDLRHLESVVTHKISEIEADLEKLTRNK.

Belongs to the UPF0325 family.

The protein is UPF0325 protein Ent638_0703 of Enterobacter sp. (strain 638).